The primary structure comprises 312 residues: Large ribosomal subunit protein uL15m (312 aa).

Residues 63–89 (RIRKGRGPSSGYGKTAGRGTKGQKAHG) are disordered. Positions 70 to 82 (PSSGYGKTAGRGT) are enriched in gly residues.

It belongs to the universal ribosomal protein uL15 family. In terms of assembly, component of the mitochondrial large ribosomal subunit (mt-LSU). Mature N.crassa 74S mitochondrial ribosomes consist of a small (37S) and a large (54S) subunit. The 37S small subunit contains a 16S ribosomal RNA (16S mt-rRNA) and 32 different proteins. The 54S large subunit contains a 23S rRNA (23S mt-rRNA) and 42 different proteins.

It is found in the mitochondrion. Component of the mitochondrial ribosome (mitoribosome), a dedicated translation machinery responsible for the synthesis of mitochondrial genome-encoded proteins, including at least some of the essential transmembrane subunits of the mitochondrial respiratory chain. The mitoribosomes are attached to the mitochondrial inner membrane and translation products are cotranslationally integrated into the membrane. The sequence is that of Large ribosomal subunit protein uL15m (mrpl10) from Neurospora crassa (strain ATCC 24698 / 74-OR23-1A / CBS 708.71 / DSM 1257 / FGSC 987).